The primary structure comprises 670 residues: DNA ligase (670 aa).

Residues 35–39, 84–85, and Glu-116 each bind NAD(+); these read DSVYD and SL. Catalysis depends on Lys-118, which acts as the N6-AMP-lysine intermediate. Positions 139, 176, 293, and 317 each coordinate NAD(+). Cys-411, Cys-414, Cys-429, and Cys-435 together coordinate Zn(2+). The BRCT domain maps to 592-670; it reads VVKSEIAGKT…EEAFLKLLKS (79 aa).

Belongs to the NAD-dependent DNA ligase family. LigA subfamily. Requires Mg(2+) as cofactor. Mn(2+) serves as cofactor.

The catalysed reaction is NAD(+) + (deoxyribonucleotide)n-3'-hydroxyl + 5'-phospho-(deoxyribonucleotide)m = (deoxyribonucleotide)n+m + AMP + beta-nicotinamide D-nucleotide.. DNA ligase that catalyzes the formation of phosphodiester linkages between 5'-phosphoryl and 3'-hydroxyl groups in double-stranded DNA using NAD as a coenzyme and as the energy source for the reaction. It is essential for DNA replication and repair of damaged DNA. The sequence is that of DNA ligase from Coxiella burnetii (strain Dugway 5J108-111).